Here is a 476-residue protein sequence, read N- to C-terminus: MKDTFVEKVDDFVKQHDVLKEHSTIVVGVSGGPDSLALLYYLLEKRAAKQFEIVVAHVDHMFRGDESHEDLQFVQDLCKGLGVICETIRINVSQYQQQYGMNAQVAARECRYAFLERIMKKYDARYVALGHHGDDQVETILMRLVRGSTPKGYAGIAVKRPFHNGYLIRPLLGVTKEEIVDYCNKLKIIPRIDPSNKKEVYTRNRLRKYVLPHLKEENPQVHEKFQKFSMQMQEDEAYLQELAFEKMNKVITKKSDKQISLSIPAFESMSMPLQRRGIQLILNYLYEYKIPSSLSSIHIDKVIEFFKRTQPSGSLDFPGDLKIVRAYEECSFGFKQEIVSPFLQDLSVPGTITLSNGDKLVTEVSEDIPSDMNETVFVAKYNDISYPLRIRSRENGDRMSIQGMNGTKKIKAIFIEAKVPREKREEWPVVCDASGNVIWLPLLKRSAFAISKETAKKDKYMIIHYKSKESSGRIMK.

ATP is bound at residue 30–35 (SGGPDS).

This sequence belongs to the tRNA(Ile)-lysidine synthase family.

The protein resides in the cytoplasm. It carries out the reaction cytidine(34) in tRNA(Ile2) + L-lysine + ATP = lysidine(34) in tRNA(Ile2) + AMP + diphosphate + H(+). Its function is as follows. Ligates lysine onto the cytidine present at position 34 of the AUA codon-specific tRNA(Ile) that contains the anticodon CAU, in an ATP-dependent manner. Cytidine is converted to lysidine, thus changing the amino acid specificity of the tRNA from methionine to isoleucine. The sequence is that of tRNA(Ile)-lysidine synthase from Bacillus cereus (strain ZK / E33L).